A 2102-amino-acid chain; its full sequence is Probable serine/threonine-protein kinase DDB_G0272282 (2102 aa).

The region spanning 1–118 (MKYQLSILGD…NWLVPQNEPA (118 aa)) is the PX domain. The region spanning 124 to 222 (NPDKSGYLIK…WIKAIELSQQ (99 aa)) is the PH domain. A compositionally biased stretch (basic and acidic residues) spans 225-240 (QDQEQYRKQEEEERQK). Disordered stretches follow at residues 225–289 (QDQE…SDGS), 302–390 (GPNN…SDLN), 426–558 (EQPG…SASP), 574–665 (SNLP…PLPN), 685–768 (NNNS…NNSL), 804–842 (KKKE…GTLR), 1029–1051 (QQQQ…SSVN), 1106–1224 (GTPT…PQPQ), and 1476–1514 (SSKV…SSLT). 2 stretches are compositionally biased toward low complexity: residues 256–281 (STLT…LPSS) and 304–327 (NNSN…NNHN). Residues 328 to 348 (HYNHHNNNHNNSHHHHHHHNG) show a composition bias toward basic residues. 2 stretches are compositionally biased toward low complexity: residues 353 to 376 (SSQV…STSL) and 426 to 437 (EQPGSYQQPQHQ). Gly residues predominate over residues 438-450 (QGGGGGGGGGGGN). Residues 466-484 (SNLSSRSNSNSSGSSSGSG) show a composition bias toward low complexity. The span at 485-501 (SSSGSGPIGSGGVGGGL) shows a compositional bias: gly residues. Low complexity-rich tracts occupy residues 535-558 (SNSS…SASP) and 587-626 (NANN…NNGN). The span at 627–659 (TASGSSCNTTPNLLPAPTNVSPIQNRARSSPMT) shows a compositional bias: polar residues. The segment covering 804–824 (KKKEKDKEKEKDKEKEKEKEI) has biased composition (basic and acidic residues). Residues 827–841 (NISTSTTPNKKNGTL) are compositionally biased toward polar residues. Over residues 1106–1118 (GTPTTTSGDNTPL) the composition is skewed to polar residues. Composition is skewed to low complexity over residues 1119–1182 (TNTA…NSSI), 1196–1221 (EQQQ…QQQP), and 1476–1492 (SSKV…SPIL). Positions 1493–1507 (SSPPPPMKQPPPQVI) are enriched in pro residues. The Protein kinase domain occupies 1527–1851 (FEIIKPISRG…AYEVKTHPFF (325 aa)). ATP is bound by residues 1533–1541 (ISRGAFGRV) and K1556. The Proton acceptor role is filled by D1650. Composition is skewed to low complexity over residues 1687–1729 (NTNT…SQTN), 1902–1999 (SQPQ…NINN), and 2006–2052 (NNNS…QINN). Disordered regions lie at residues 1687–1741 (NTNT…KNTL) and 1902–2070 (SQPQ…SKIE). The AGC-kinase C-terminal domain maps to 1852-1911 (ANVNWDTLIDQEMDNIFLPKPENNYDTDYFWDRQSMYDDEAEDDFLTINQSQPQHQSQHQ).

Belongs to the protein kinase superfamily. AGC Ser/Thr protein kinase family.

The enzyme catalyses L-seryl-[protein] + ATP = O-phospho-L-seryl-[protein] + ADP + H(+). The catalysed reaction is L-threonyl-[protein] + ATP = O-phospho-L-threonyl-[protein] + ADP + H(+). The protein is Probable serine/threonine-protein kinase DDB_G0272282 of Dictyostelium discoideum (Social amoeba).